The following is a 283-amino-acid chain: DegV domain-containing protein lin2658 (283 aa).

In terms of domain architecture, DegV spans 5-282; that stretch reads IAVVTDSTTY…EGALGLTWSI (278 aa). Hexadecanoate contacts are provided by Ser63 and Ser96.

In terms of biological role, may bind long-chain fatty acids, such as palmitate, and may play a role in lipid transport or fatty acid metabolism. This is DegV domain-containing protein lin2658 from Listeria innocua serovar 6a (strain ATCC BAA-680 / CLIP 11262).